The chain runs to 70 residues: Large ribosomal subunit protein bL32 (70 aa).

A compositionally biased stretch (basic residues) spans 1-19; it reads MAVPKKKTSPSRRGMRRSH. Residues 1 to 21 are disordered; the sequence is MAVPKKKTSPSRRGMRRSHQA.

Belongs to the bacterial ribosomal protein bL32 family.

The chain is Large ribosomal subunit protein bL32 from Granulibacter bethesdensis (strain ATCC BAA-1260 / CGDNIH1).